A 132-amino-acid polypeptide reads, in one-letter code: Protein FAM174C (132 aa).

Positions 1–26 are cleaved as a signal peptide; that stretch reads MGPRVLQPPLLLLLLALLLAALPCGA. Residues 34–66 are disordered; the sequence is PAQVTLSPPPAVTNGSQPGAPHNSTHTRPPGAS. The segment covering 46 to 60 has biased composition (polar residues); that stretch reads TNGSQPGAPHNSTHT. Asparagine 47 carries an N-linked (GlcNAc...) asparagine glycan. Residues 73–93 traverse the membrane as a helical segment; sequence SFYVILGFCGLTALYFLIRAF. Threonine 113 is modified (phosphothreonine). The segment at 113–132 is disordered; that stretch reads TEMASLDSDEETVFESRNLR. A phosphoserine mark is found at serine 117 and serine 120.

This sequence belongs to the FAM174 family.

Its subcellular location is the membrane. This is Protein FAM174C from Homo sapiens (Human).